A 205-amino-acid chain; its full sequence is Large ribosomal subunit protein uL4 (205 aa).

It belongs to the universal ribosomal protein uL4 family. In terms of assembly, part of the 50S ribosomal subunit.

In terms of biological role, one of the primary rRNA binding proteins, this protein initially binds near the 5'-end of the 23S rRNA. It is important during the early stages of 50S assembly. It makes multiple contacts with different domains of the 23S rRNA in the assembled 50S subunit and ribosome. Its function is as follows. Forms part of the polypeptide exit tunnel. This chain is Large ribosomal subunit protein uL4, found in Thermus thermophilus (strain ATCC BAA-163 / DSM 7039 / HB27).